The sequence spans 763 residues: Formin-like protein 4 (763 aa).

Residues M1–S33 form the signal peptide. Positions P52–D73 are disordered. Residues A80–H100 traverse the membrane as a helical segment. 2 disordered regions span residues I185–H327 and R726–M763. Polar residues predominate over residues R205–H225. A compositionally biased stretch (basic and acidic residues) spans V229–K238. The segment covering D240 to L280 has biased composition (pro residues). The segment covering K281–K292 has biased composition (low complexity). The region spanning S303–V738 is the FH2 domain. Basic and acidic residues predominate over residues L316–H327. Polar residues predominate over residues R726 to N736.

It belongs to the formin-like family. Class-I subfamily. In terms of assembly, interacts with profilin. In terms of tissue distribution, expressed in the whole plant (at protein level).

It localises to the cell membrane. Might be involved in the organization and polarity of the actin cytoskeleton. The chain is Formin-like protein 4 (FH4) from Arabidopsis thaliana (Mouse-ear cress).